We begin with the raw amino-acid sequence, 275 residues long: Large ribosomal subunit protein uL2c (275 aa).

The tract at residues 225-249 (PVDHPHGGGEGRAPIGRKKPTTPWG) is disordered.

This sequence belongs to the universal ribosomal protein uL2 family. In terms of assembly, part of the 50S ribosomal subunit.

The protein resides in the plastid. This Cuscuta reflexa (Southern Asian dodder) protein is Large ribosomal subunit protein uL2c (rpl2).